A 134-amino-acid polypeptide reads, in one-letter code: Phospholipase A2 (134 aa).

Ca(2+) contacts are provided by Trp-8, Gly-10, and Gly-12. Intrachain disulfides connect Cys-9/Cys-31, Cys-30/Cys-70, Cys-37/Cys-63, Cys-61/Cys-95, and Cys-105/Cys-113. A glycan (N-linked (GlcNAc...) asparagine) is linked at Asn-13. His-34 is an active-site residue. Residue Asp-35 coordinates Ca(2+). Asp-64 is a catalytic residue.

The protein belongs to the phospholipase A2 family. Group III subfamily. The cofactor is Ca(2+). In terms of tissue distribution, expressed by the venom gland.

The protein resides in the secreted. It carries out the reaction a 1,2-diacyl-sn-glycero-3-phosphocholine + H2O = a 1-acyl-sn-glycero-3-phosphocholine + a fatty acid + H(+). Functionally, PLA2 catalyzes the calcium-dependent hydrolysis of the 2-acyl groups in 3-sn-phosphoglycerides. The protein is Phospholipase A2 of Apis dorsata (Giant honeybee).